The following is a 411-amino-acid chain: Serine--tRNA ligase (411 aa).

Residue Thr226–Glu228 coordinates L-serine. Arg257–Glu259 serves as a coordination point for ATP. Glu280 is a binding site for L-serine. Residue Glu344 to Ser347 participates in ATP binding. Position 379 (Ser379) interacts with L-serine.

It belongs to the class-II aminoacyl-tRNA synthetase family. Type-1 seryl-tRNA synthetase subfamily. As to quaternary structure, homodimer. The tRNA molecule binds across the dimer.

Its subcellular location is the cytoplasm. It catalyses the reaction tRNA(Ser) + L-serine + ATP = L-seryl-tRNA(Ser) + AMP + diphosphate + H(+). The catalysed reaction is tRNA(Sec) + L-serine + ATP = L-seryl-tRNA(Sec) + AMP + diphosphate + H(+). Its pathway is aminoacyl-tRNA biosynthesis; selenocysteinyl-tRNA(Sec) biosynthesis; L-seryl-tRNA(Sec) from L-serine and tRNA(Sec): step 1/1. Catalyzes the attachment of serine to tRNA(Ser). Is also able to aminoacylate tRNA(Sec) with serine, to form the misacylated tRNA L-seryl-tRNA(Sec), which will be further converted into selenocysteinyl-tRNA(Sec). The polypeptide is Serine--tRNA ligase (Campylobacter jejuni (strain RM1221)).